Reading from the N-terminus, the 444-residue chain is Methylenetetrahydrofolate--tRNA-(uracil-5-)-methyltransferase TrmFO (444 aa).

9 to 14 (GAGMAG) lines the FAD pocket.

Belongs to the MnmG family. TrmFO subfamily. Requires FAD as cofactor.

It is found in the cytoplasm. The enzyme catalyses uridine(54) in tRNA + (6R)-5,10-methylene-5,6,7,8-tetrahydrofolate + NADH + H(+) = 5-methyluridine(54) in tRNA + (6S)-5,6,7,8-tetrahydrofolate + NAD(+). The catalysed reaction is uridine(54) in tRNA + (6R)-5,10-methylene-5,6,7,8-tetrahydrofolate + NADPH + H(+) = 5-methyluridine(54) in tRNA + (6S)-5,6,7,8-tetrahydrofolate + NADP(+). Catalyzes the folate-dependent formation of 5-methyl-uridine at position 54 (M-5-U54) in all tRNAs. The chain is Methylenetetrahydrofolate--tRNA-(uracil-5-)-methyltransferase TrmFO from Cereibacter sphaeroides (strain ATCC 17025 / ATH 2.4.3) (Rhodobacter sphaeroides).